The following is a 200-amino-acid chain: Nucleoside triphosphate pyrophosphatase (200 aa).

The active-site Proton acceptor is the Asp-79.

It belongs to the Maf family. A divalent metal cation serves as cofactor.

The protein resides in the cytoplasm. It carries out the reaction a ribonucleoside 5'-triphosphate + H2O = a ribonucleoside 5'-phosphate + diphosphate + H(+). It catalyses the reaction a 2'-deoxyribonucleoside 5'-triphosphate + H2O = a 2'-deoxyribonucleoside 5'-phosphate + diphosphate + H(+). Functionally, nucleoside triphosphate pyrophosphatase. May have a dual role in cell division arrest and in preventing the incorporation of modified nucleotides into cellular nucleic acids. The polypeptide is Nucleoside triphosphate pyrophosphatase (Legionella pneumophila (strain Paris)).